The chain runs to 832 residues: Spindle pole body component alp6 (832 aa).

The interval 1–186 is interaction with mzt1; the sequence is MSEIHVKTAL…STETSSVQHT (186 aa). Thr286 bears the Phosphothreonine mark.

This sequence belongs to the TUBGCP family. As to quaternary structure, part of the gamma-tubulin complex. Interacts directly with mzt1. Interacts with mto1. Interacts with mto2.

Its subcellular location is the cytoplasm. It localises to the cytoskeleton. The protein localises to the microtubule organizing center. The protein resides in the spindle pole body. Functionally, component of the gamma tubule complex that is required for the regulation of both interphase microtubules and mitotic bipolar spindles. This Schizosaccharomyces pombe (strain 972 / ATCC 24843) (Fission yeast) protein is Spindle pole body component alp6 (alp6).